The sequence spans 173 residues: Bifunctional protein PyrR (173 aa).

Substrate-binding positions include 40-41 (TR), 97-105 (DDVLYTGRT), and Arg-130. Residues 93–105 (VILIDDVLYTGRT) carry the PRPP-binding motif.

The protein belongs to the purine/pyrimidine phosphoribosyltransferase family. PyrR subfamily. Homodimer and homohexamer; in equilibrium.

It catalyses the reaction UMP + diphosphate = 5-phospho-alpha-D-ribose 1-diphosphate + uracil. Functionally, regulates transcriptional attenuation of the pyrimidine nucleotide (pyr) operon by binding in a uridine-dependent manner to specific sites on pyr mRNA. This disrupts an antiterminator hairpin in the RNA and favors formation of a downstream transcription terminator, leading to a reduced expression of downstream genes. Its function is as follows. Also displays a weak uracil phosphoribosyltransferase activity which is not physiologically significant. The sequence is that of Bifunctional protein PyrR from Streptococcus pyogenes serotype M6 (strain ATCC BAA-946 / MGAS10394).